The primary structure comprises 57 residues: Large ribosomal subunit protein bL32 (57 aa).

The span at 1–19 (MAVPKRRMSRANTRSRRAQ) shows a compositional bias: basic residues. The segment at 1 to 20 (MAVPKRRMSRANTRSRRAQW) is disordered.

Belongs to the bacterial ribosomal protein bL32 family.

The sequence is that of Large ribosomal subunit protein bL32 from Mycolicibacterium smegmatis (strain ATCC 700084 / mc(2)155) (Mycobacterium smegmatis).